Reading from the N-terminus, the 1196-residue chain is ATP-dependent helicase/deoxyribonuclease subunit B (1196 aa).

[4Fe-4S] cluster is bound by residues Cys-823, Cys-1149, Cys-1152, and Cys-1158.

Belongs to the helicase family. AddB/RexB type 2 subfamily. Heterodimer of AddA and RexB. It depends on Mg(2+) as a cofactor. [4Fe-4S] cluster serves as cofactor.

In terms of biological role, the heterodimer acts as both an ATP-dependent DNA helicase and an ATP-dependent, dual-direction single-stranded exonuclease. Recognizes the chi site generating a DNA molecule suitable for the initiation of homologous recombination. This subunit has 5' -&gt; 3' nuclease activity but not helicase activity. In Enterococcus faecalis (strain ATCC 700802 / V583), this protein is ATP-dependent helicase/deoxyribonuclease subunit B.